Here is a 122-residue protein sequence, read N- to C-terminus: Large ribosomal subunit protein uL14 (122 aa).

Belongs to the universal ribosomal protein uL14 family. In terms of assembly, part of the 50S ribosomal subunit. Forms a cluster with proteins L3 and L19. In the 70S ribosome, L14 and L19 interact and together make contacts with the 16S rRNA in bridges B5 and B8.

Its function is as follows. Binds to 23S rRNA. Forms part of two intersubunit bridges in the 70S ribosome. In Helicobacter pylori (strain J99 / ATCC 700824) (Campylobacter pylori J99), this protein is Large ribosomal subunit protein uL14.